The following is a 1856-amino-acid chain: MSRKSIGEKRHSFSMRKLSVGLVSVTVSSFFLMSQGIQSVSADNMESPIHYKYMTEGKLTDEEKSLLVEALPQLAEESDDTYYLVYRSQQFLPNTGFNPTVGTFLFTAGLSLLVLLVSKRENGKKRLVHFLLLTSMGVQLLPASAFGLTSQILSAYNSQLSIGVGEHLPEPLKIEGYQYIGYIKTKKQDNTELSRTVDGKYSAQRDSQPNSTKTSDVVHSADLEWNQGQGKVSLQGEASGDDGLSEKSSIAADNLSSNDSFASQVEQNPDHKGESVVRPTVPEQGNPVSATTVQSAEEEVLATTNDRPEYKLPLETKGTQEPGHEGEAAVREDLPVYTKPLETKGTQGPGHEGEAAVREEEPAYTEPLATKGTQEPGHEGKATVREETLEYTEPVATKGTQEPEHEGEAAVEEELPALEVTTRNRTEIQNIPYTTEEIQDPTLLKNRRKIERQGQAGTRTIQYEDYIVNGNVVETKEVSRTEVAPVNEVVKVGTLVKVKPTVEITNLTKVENKKSITVSYNLIDTTSAYVSAKTQVFHGDKLVKEVDIENPAKEQVISGLDYYTPYTVKTHLTYNLGENNEENTETSTQDFQLEYKKIEIKDIDSVELYGKENDRYRRYLSLSEAPTDTAKYFVKVKSDRFKEMYLPVKSITENTDGTYKVTVAVDQLVEEGTDGYKDDYTFTVAKSKAEQPGVYTSFKQLVTAMQSNLSGVYTLASDMTADEVSLGDKQTSYLTGAFTGSLIGSDGTKSYAIYDLKKPLFDTLNGATVRDLDIKTVSADSKENVAALAKAANSANINNVAVEGKISGAKSVAGLVASATNTVIENSSFTGKLIANHQDSNKNDTGGIVGNITGNSSRVNKVRVDALISTNARNNNQTAGGIVGRLENGALISNSVATGEIRNGQGYSRVGGIVGSTWQNGRVNNVVSNVDVGDGYVITGDQYAAADVKNASTSVDNRKADRFATKLSKDQIDAKVADYGITVTLDDTGQDLKRNLREVDYTRLNKAEAERKVAYSNIEKLMPFYNKDLVVHYGNKVATTDKLYTTELLDVVPMKDDEVVTDINNKKNSINKVMLHFKDNTVEYLDVTFKENFINSQVIEYNVTGKEYIFTPEAFVSDYTAITNNVLSDLQNVTLNSEATKKVLGAANDAALDNLYLDRQFEEVKANIAEHLRKVLAMDKSINTTGDGVVEYVSEKIKNNKEAFMLGLTYMNRWYDINYGKMNTKDLSTYKFDFNGNNETSTLDTIVALGNSGLDNLRASNTVGLYANKLASVKGEDSVFDFVEAYRKLFLPNKTNNEWFKENTKAYIVEMKSDIAEVREKQESPTADRKYSLGVYDRISAPSWGHKSMLLPLLTLPEESVYISSNMSTLAFGSYERYRDSVDGVILSGDALRTYVRNRVDIAAKRHRDHYDIWYNLLDSASKEKLFRSVIVYDGFNVKDETGRTYWARLTDKNIGSIKEFFGPVGKWYEYNSSAGAYANGSLTHFVLDRLLDAYGTSVYTHEMVHNSDSAIYFEGNGRREGLGAELYALGLLQSVDSVNSHILALNTLYKAEKDDLNRLHTYNPVERFDSDEALQSYMHGSYDVMYTLDAMEAKAILAQNNDVKKKWFRKIENYYVRDTRHNKDTHAGNKVRPLTDEEVANLTSLNSLIDNDIINRRSYDDSREYKRNGYYTISMFSPVYAALSNSKGAPGDIMFRKIAYELLAEKGYHKGFLPYVSNQYGAEAFASGSKTFSSWHGRDVALVTDDLVFKKVFNGEYSSWADFKKAMFKQRIDKQDNLKPITIQYELGNPNSTKEVTITTAAQMQQLINEAAAKDITNIDRATSHTPASWVHLLKQKIYNAYLRTTDDFRNSIYK.

Residues 1–42 (MSRKSIGEKRHSFSMRKLSVGLVSVTVSSFFLMSQGIQSVSA) form the signal peptide. Residues 43–95 (DNMESPIHYKYMTEGKLTDEEKSLLVEALPQLAEESDDTYYLVYRSQQFLPNT) constitute a propeptide that is removed on maturation. The short motif at 92-96 (LPNTG) is the LPXTG sorting signal element. Position 95 is a pentaglycyl murein peptidoglycan amidated threonine (T95). Transmembrane regions (helical) follow at residues 97–117 (FNPTVGTFLFTAGLSLLVLLV) and 130–152 (FLLLTSMGVQLLPASAFGLTSQI). Over 153 to 1856 (LSAYNSQLSI…TDDFRNSIYK (1704 aa)) the chain is Extracellular. Composition is skewed to polar residues over residues 254-267 (NLSSNDSFASQVEQ) and 286-295 (NPVSATTVQS). Positions 254–362 (NLSSNDSFAS…GEAAVREEEP (109 aa)) are disordered. Basic and acidic residues-rich tracts occupy residues 322–334 (PGHEGEAAVREDL) and 351–361 (HEGEAAVREEE). Residues 417 to 496 (ALEVTTRNRT…NEVVKVGTLV (80 aa)) enclose the G5 domain. H1502 lines the Zn(2+) pocket. The active site involves E1503. Positions 1506 and 1526 each coordinate Zn(2+).

The protein belongs to the peptidase M26 family. Zn(2+) serves as cofactor. The Gram-positive cell-wall anchor motif LPXTG is located in the N-terminal part, in contrast to such motifs in other known streptococcal and staphylococcal proteins. The protease could be cleaved by the sortase and anchored in the membrane via the two potential N-terminal transmembrane domains, whereas the propeptide located prior to the LPXTG motif would remain attached to the cell wall peptidoglycan by an amide bond.

It is found in the secreted. It localises to the cell wall. The protein localises to the membrane. Its function is as follows. Zinc metalloproteinase that specifically cleaves human matrix metalloproteinase 9 (MMP-9), leading to its activation. May play a role in pneumococcal virulence and pathogenicity in the lung. This chain is Zinc metalloprotease ZmpC (zmpC), found in Streptococcus pneumoniae serotype 4 (strain ATCC BAA-334 / TIGR4).